A 187-amino-acid polypeptide reads, in one-letter code: 1,6-anhydro-N-acetylmuramyl-L-alanine amidase AmpD (187 aa).

The region spanning 29–167 (SLLVVHNISL…APDRKTDPGP (139 aa)) is the N-acetylmuramoyl-L-alanine amidase domain. Residue His-34 participates in Zn(2+) binding. Residue Glu-116 is the Proton acceptor of the active site. Residues His-154 and Asp-164 each contribute to the Zn(2+) site.

The protein belongs to the N-acetylmuramoyl-L-alanine amidase 2 family. Zn(2+) is required as a cofactor.

The protein resides in the cytoplasm. It carries out the reaction Hydrolyzes the link between N-acetylmuramoyl residues and L-amino acid residues in certain cell-wall glycopeptides.. Its function is as follows. Involved in cell wall peptidoglycan recycling. Specifically cleaves the amide bond between the lactyl group of N-acetylmuramic acid and the alpha-amino group of the L-alanine in degradation products containing an anhydro N-acetylmuramyl moiety. The sequence is that of 1,6-anhydro-N-acetylmuramyl-L-alanine amidase AmpD (ampD) from Salmonella typhimurium (strain SL1344).